We begin with the raw amino-acid sequence, 258 residues long: Synapse differentiation-inducing gene protein 1 (258 aa).

Residues 1-181 (MDGIIEQKSM…NFLMMPPRDH (181 aa)) lie on the Cytoplasmic side of the membrane. Residue serine 137 is modified to Phosphoserine. Residues 182 to 202 (LGLSVFSMLCCFWPLGIAAFY) traverse the membrane as a helical segment. Residues 203-228 (LSHETNKAVAKGDLHQASTSSRRALF) lie on the Extracellular side of the membrane. Positions 229-249 (LAVLSITIGTGVYVGVAVALI) form an intramembrane region, helical. The Extracellular portion of the chain corresponds to 250–258 (AYLSKNNHL).

It belongs to the CD225/Dispanin family. Homodimer. Interacts with GRIA1 and GRIA2.

The protein localises to the cell membrane. It localises to the early endosome membrane. It is found in the postsynaptic density membrane. The protein resides in the synapse. Its subcellular location is the cell projection. The protein localises to the dendrite. It localises to the dendritic spine. May regulate AMPA receptor content at nascent synapses, and have a role in postsynaptic development and maturation. The protein is Synapse differentiation-inducing gene protein 1 (SYNDIG1) of Homo sapiens (Human).